A 175-amino-acid polypeptide reads, in one-letter code: Co-chaperone protein HscB homolog (175 aa).

The region spanning Ser-7–Leu-79 is the J domain.

Belongs to the HscB family. In terms of assembly, interacts with HscA and stimulates its ATPase activity.

In terms of biological role, co-chaperone involved in the maturation of iron-sulfur cluster-containing proteins. Seems to help targeting proteins to be folded toward HscA. The sequence is that of Co-chaperone protein HscB homolog from Paraburkholderia xenovorans (strain LB400).